The primary structure comprises 71 residues: MAVEKTNSSSSLAEVIDRILDKGIVIDAWVRVSLVGIELLAIEARIVIASVETYLKYAEAVGLTQSAAVPA.

The alpha helix 1 stretch occupies residues 12-22 (LAEVIDRILDK). The tract at residues 23–32 (GIVIDAWVRV) is beta-strand 1. The beta turn stretch occupies residues 33 to 36 (SLVG). Residues 37–46 (IELLAIEARI) are beta-strand 2. The tract at residues 47-70 (VIASVETYLKYAEAVGLTQSAAVP) is alpha helix 2.

This sequence belongs to the gas vesicle GvpA family. The gas vesicle shell is 2 nm thick and consists of a single layer of this protein. It forms helical ribs nearly perpendicular to the long axis of the vesicle.

The protein resides in the gas vesicle shell. Its function is as follows. Gas vesicles (GV) are hollow, gas filled proteinaceous nanostructures found in some microorganisms. During planktonic growth they allow positioning of the organism at a favorable depth for light or nutrient acquisition. GVs are highly permeable to gas. GvpA forms the protein shell. The ratio of GvpA:GvpC is estimated to be 33:1 and more recently 25:1. The sequence is that of Gas vesicle protein A from Dolichospermum flosaquae (Anabaena flos-aquae).